Reading from the N-terminus, the 812-residue chain is Toll-like receptor 10 (812 aa).

Residues 1-19 (MRYIRSIYIFCSIVTSVRS) form the signal peptide. Residues 20 to 577 (GASELPEERE…VHLPEISCNT (558 aa)) lie on the Extracellular side of the membrane. 5 LRR repeats span residues 24–46 (LPEE…PEGL), 49–70 (ITTT…DFRS), 73–94 (KLKV…TFEF), 97–118 (ELSY…SLAG), and 119–139 (LRHL…VETG). N-linked (GlcNAc...) asparagine glycosylation occurs at N33. N140 is a glycosylation site (N-linked (GlcNAc...) asparagine). An LRR 6 repeat occupies 143 to 166 (HLETLGLSGAKIQKSDFQKIAHLQ). N-linked (GlcNAc...) asparagine glycosylation occurs at N189. 4 LRR repeats span residues 296 to 321 (SNTV…ESIY), 325 to 348 (TKMD…PMYP), 350 to 373 (RFQY…IQLP), and 374 to 395 (HLKT…SHFA). N331 is a glycosylation site (N-linked (GlcNAc...) asparagine). N397 carries an N-linked (GlcNAc...) asparagine glycan. LRR repeat units lie at residues 399-420 (SLRH…NCLW), 423-443 (TLVT…GCLP), 445-467 (NIQI…THLT), 468-489 (SLRE…SHFR), and 490-510 (RLLV…DFFQ). N428 carries an N-linked (GlcNAc...) asparagine glycan. Residues 523–577 (NPFRCTCELRDFIQLGKYSEGMMVGWSDSYICEYPLNLKGTQLKDVHLPEISCNT) enclose the LRRCT domain. The helical transmembrane segment at 578–598 (GLLIVTIVVVMLVLGMAVAFC) threads the bilayer. Topologically, residues 599–812 (CLHFDLPWYL…AISLIRTDCL (214 aa)) are cytoplasmic. The region spanning 633–776 (VQFHVFISYS…LFWANLRAAL (144 aa)) is the TIR domain.

It belongs to the Toll-like receptor family. As to quaternary structure, binds MYD88 via their respective TIR domains.

Its subcellular location is the membrane. Functionally, participates in the innate immune response to microbial agents. Acts via MYD88 and TRAF6, leading to NF-kappa-B activation, cytokine secretion and the inflammatory response. This Bos taurus (Bovine) protein is Toll-like receptor 10 (TLR10).